Here is a 219-residue protein sequence, read N- to C-terminus: MGQKVNPIGLRVGVIRDWESRWFAEKDYATLLHEDIKIREYINVRLKDSAVAKVEIERAANRVNVTIHTAKPGMVIGKGGTEVEALRKALNQLTGKRVHINILEVKRADLNAKLVGENIARQLENRVSFRRAQKQVIQRAMRAGAKGIKTQVSGRLGGADIARAESYSEGTVPLHTLRADIDYAAVEADTTYGKLGVKVWIYRGEVLPTKKKASEEGGK.

The region spanning 38–106 (IREYINVRLK…RVHINILEVK (69 aa)) is the KH type-2 domain.

Belongs to the universal ribosomal protein uS3 family. Part of the 30S ribosomal subunit. Forms a tight complex with proteins S10 and S14.

Functionally, binds the lower part of the 30S subunit head. Binds mRNA in the 70S ribosome, positioning it for translation. The chain is Small ribosomal subunit protein uS3 from Bacillus thuringiensis (strain Al Hakam).